The sequence spans 237 residues: CD63 antigen (237 aa).

Residues Met-1–Lys-11 are Cytoplasmic-facing. A helical transmembrane segment spans residues Phe-12–Gly-32. The Extracellular portion of the chain corresponds to Val-33–Phe-51. The N-linked (GlcNAc...) asparagine glycan is linked to Asn-40. A helical membrane pass occupies residues Leu-52–Cys-72. At Cys-73–Cys-81 the chain is on the cytoplasmic side. A helical transmembrane segment spans residues Leu-82–Ile-102. At Ala-103–Val-202 the chain is on the extracellular side. N-linked (GlcNAc...) asparagine glycosylation is found at Asn-130, Asn-150, and Asn-171. Residues Leu-203–Ala-223 form a helical membrane-spanning segment. Residues Cys-224–Met-237 are Cytoplasmic-facing. The Lysosomal targeting motif motif lies at Gly-233 to Met-237.

Belongs to the tetraspanin (TM4SF) family. In terms of assembly, interacts with TIMP1 and ITGB1 and recruits TIMP1 to ITGB1. Interacts with CD9. Identified in a complex with CD9 and ITGB3. Interacts with PMEL. Interacts with KDR/VEGFR2; identified in a complex with ITGB1 and KDR/VEGFR2 and is required to recruit KDR to ITGB1 complexes. Interacts with SYT7. In terms of processing, palmitoylated at a low, basal level in unstimulated platelets. The level of palmitoylation increases when platelets are activated by thrombin (in vitro).

It is found in the cell membrane. The protein localises to the lysosome membrane. Its subcellular location is the late endosome membrane. It localises to the endosome. The protein resides in the multivesicular body. It is found in the melanosome. The protein localises to the secreted. Its subcellular location is the extracellular exosome. It localises to the cell surface. In terms of biological role, functions as a cell surface receptor for TIMP1 and plays a role in the activation of cellular signaling cascades. Plays a role in the activation of ITGB1 and integrin signaling, leading to the activation of AKT, FAK/PTK2 and MAP kinases. Promotes cell survival, reorganization of the actin cytoskeleton, cell adhesion, spreading and migration, via its role in the activation of AKT and FAK/PTK2. Plays a role in VEGFA signaling via its role in regulating the internalization of KDR/VEGFR2. Plays a role in intracellular vesicular transport processes, and is required for normal trafficking of the PMEL luminal domain that is essential for the development and maturation of melanocytes. Plays a role in the adhesion of leukocytes onto endothelial cells via its role in the regulation of SELP trafficking. May play a role in mast cell degranulation in response to Ms4a2/FceRI stimulation, but not in mast cell degranulation in response to other stimuli. This chain is CD63 antigen (CD63), found in Bos taurus (Bovine).